Reading from the N-terminus, the 270-residue chain is Putative pyruvate, phosphate dikinase regulatory protein (270 aa).

151–158 (GVSRTSKT) provides a ligand contact to ADP.

Belongs to the pyruvate, phosphate/water dikinase regulatory protein family. PDRP subfamily.

The enzyme catalyses N(tele)-phospho-L-histidyl/L-threonyl-[pyruvate, phosphate dikinase] + ADP = N(tele)-phospho-L-histidyl/O-phospho-L-threonyl-[pyruvate, phosphate dikinase] + AMP + H(+). The catalysed reaction is N(tele)-phospho-L-histidyl/O-phospho-L-threonyl-[pyruvate, phosphate dikinase] + phosphate + H(+) = N(tele)-phospho-L-histidyl/L-threonyl-[pyruvate, phosphate dikinase] + diphosphate. Functionally, bifunctional serine/threonine kinase and phosphorylase involved in the regulation of the pyruvate, phosphate dikinase (PPDK) by catalyzing its phosphorylation/dephosphorylation. This Bacillus velezensis (strain DSM 23117 / BGSC 10A6 / LMG 26770 / FZB42) (Bacillus amyloliquefaciens subsp. plantarum) protein is Putative pyruvate, phosphate dikinase regulatory protein.